A 330-amino-acid chain; its full sequence is D-cysteine desulfhydrase (330 aa).

N6-(pyridoxal phosphate)lysine is present on lysine 52.

The protein belongs to the ACC deaminase/D-cysteine desulfhydrase family. Homodimer. Requires pyridoxal 5'-phosphate as cofactor.

It catalyses the reaction D-cysteine + H2O = hydrogen sulfide + pyruvate + NH4(+) + H(+). Its function is as follows. Catalyzes the alpha,beta-elimination reaction of D-cysteine and of several D-cysteine derivatives. It could be a defense mechanism against D-cysteine. This Yersinia pseudotuberculosis serotype O:1b (strain IP 31758) protein is D-cysteine desulfhydrase.